The following is a 632-amino-acid chain: Chaperone protein HtpG (632 aa).

Positions 1 to 345 (MTTAAHAETL…SKDLSLNVSR (345 aa)) are a; substrate-binding. A b region spans residues 346–561 (ELLQKDPQVD…EHDMGYQMRR (216 aa)). Residues 562-632 (LMEAAGQPLP…VQRLNKLLSH (71 aa)) are c.

This sequence belongs to the heat shock protein 90 family. Homodimer.

It is found in the cytoplasm. Molecular chaperone. Has ATPase activity. In Chromohalobacter salexigens (strain ATCC BAA-138 / DSM 3043 / CIP 106854 / NCIMB 13768 / 1H11), this protein is Chaperone protein HtpG.